A 118-amino-acid polypeptide reads, in one-letter code: MARFVVLVLLGLLYLSHLDAVQHSPKVQVYSRHPAENGKPNFLNCYVSGFHPPQIDITLMKNGKKMEAEQTDLSFNRDWTFYLLVHTEFTPTVEDEYSCQVNHTTLSEPKVVKWDRDM.

An N-terminal signal peptide occupies residues 1-20 (MARFVVLVLLGLLYLSHLDA). Residues 25-113 (PKVQVYSRHP…TTLSEPKVVK (89 aa)) form the Ig-like C1-type domain. C45 and C99 are oxidised to a cystine.

Belongs to the beta-2-microglobulin family. Heterodimer of an alpha chain and a beta chain. Beta-2-microglobulin is the beta-chain of major histocompatibility complex class I molecules.

The protein localises to the secreted. In terms of biological role, component of the class I major histocompatibility complex (MHC). Involved in the presentation of peptide antigens to the immune system. The sequence is that of Beta-2-microglobulin (B2M) from Felis catus (Cat).